Reading from the N-terminus, the 421-residue chain is Flap endonuclease 1 (421 aa).

An N-domain region spans residues 1–109 (MGIKGLAKLL…HELIKRREKR (109 aa)). Position 34 (aspartate 34) interacts with Mg(2+). 2 residues coordinate DNA: arginine 47 and arginine 75. Mg(2+) contacts are provided by aspartate 91, glutamate 163, glutamate 165, aspartate 184, and aspartate 186. The segment at 127-258 (EQDKQSKRLV…KTALKLIREH (132 aa)) is I-domain. A DNA-binding site is contributed by glutamate 163. Positions 236 and 238 each coordinate DNA. Position 238 (aspartate 238) interacts with Mg(2+). Residues 284–307 (KKLDAQSDDDDEEGVESPSKEENN) form a disordered region. A compositionally biased stretch (acidic residues) spans 289–298 (QSDDDDEEGV). Positions 379-387 (PQTRMDSFF) are interaction with PCNA. Residues 398 to 421 (SAAKRKADAAKAKAAVSKKKTKKH) are disordered.

It belongs to the XPG/RAD2 endonuclease family. FEN1 subfamily. In terms of assembly, interacts with PCNA. Three molecules of FEN1 bind to one PCNA trimer with each molecule binding to one PCNA monomer. PCNA stimulates the nuclease activity without altering cleavage specificity. It depends on Mg(2+) as a cofactor. In terms of processing, phosphorylated. Phosphorylation upon DNA damage induces relocalization to the nuclear plasma.

It is found in the nucleus. The protein resides in the nucleolus. The protein localises to the nucleoplasm. It localises to the mitochondrion. Structure-specific nuclease with 5'-flap endonuclease and 5'-3' exonuclease activities involved in DNA replication and repair. During DNA replication, cleaves the 5'-overhanging flap structure that is generated by displacement synthesis when DNA polymerase encounters the 5'-end of a downstream Okazaki fragment. It enters the flap from the 5'-end and then tracks to cleave the flap base, leaving a nick for ligation. Also involved in the long patch base excision repair (LP-BER) pathway, by cleaving within the apurinic/apyrimidinic (AP) site-terminated flap. Acts as a genome stabilization factor that prevents flaps from equilibrating into structures that lead to duplications and deletions. Also possesses 5'-3' exonuclease activity on nicked or gapped double-stranded DNA, and exhibits RNase H activity. Also involved in replication and repair of rDNA and in repairing mitochondrial DNA. This Phaeodactylum tricornutum (strain CCAP 1055/1) protein is Flap endonuclease 1.